The following is a 124-amino-acid chain: Ribonuclease pancreatic (124 aa).

Substrate-binding residues include K7 and R10. The Proton acceptor role is filled by H12. 4 disulfides stabilise this stretch: C26–C84, C40–C95, C58–C110, and C65–C72. The N-linked (GlcNAc...) asparagine; partial glycan is linked to N34. Substrate is bound by residues 41–45, K66, and R85; that span reads KPVBT. H119 functions as the Proton donor in the catalytic mechanism.

This sequence belongs to the pancreatic ribonuclease family. As to quaternary structure, monomer. Interacts with and forms tight 1:1 complexes with RNH1. Dimerization of two such complexes may occur. Interaction with RNH1 inhibits this protein. As to expression, pancreas.

The protein resides in the secreted. The enzyme catalyses an [RNA] containing cytidine + H2O = an [RNA]-3'-cytidine-3'-phosphate + a 5'-hydroxy-ribonucleotide-3'-[RNA].. It catalyses the reaction an [RNA] containing uridine + H2O = an [RNA]-3'-uridine-3'-phosphate + a 5'-hydroxy-ribonucleotide-3'-[RNA].. In terms of biological role, endonuclease that catalyzes the cleavage of RNA on the 3' side of pyrimidine nucleotides. Acts on single-stranded and double-stranded RNA. This chain is Ribonuclease pancreatic (RNASE1), found in Damaliscus korrigum (Topi).